Here is a 310-residue protein sequence, read N- to C-terminus: Porphobilinogen deaminase (310 aa).

Residue C236 is modified to S-(dipyrrolylmethanemethyl)cysteine.

Belongs to the HMBS family. In terms of assembly, monomer. Dipyrromethane is required as a cofactor.

The catalysed reaction is 4 porphobilinogen + H2O = hydroxymethylbilane + 4 NH4(+). The protein operates within porphyrin-containing compound metabolism; protoporphyrin-IX biosynthesis; coproporphyrinogen-III from 5-aminolevulinate: step 2/4. Tetrapolymerization of the monopyrrole PBG into the hydroxymethylbilane pre-uroporphyrinogen in several discrete steps. The protein is Porphobilinogen deaminase of Nitratiruptor sp. (strain SB155-2).